The following is a 562-amino-acid chain: Isochorismate synthase 2, chloroplastic (562 aa).

The N-terminal 55 residues, 1–55 (MASLQCSFHFLGTNPKKYNPSSIFQSYSRTSFTKLSSRVSRQRFLRCTLSMNGCE), are a transit peptide targeting the chloroplast.

This sequence belongs to the isochorismate synthase family. Mg(2+) is required as a cofactor.

It localises to the plastid. Its subcellular location is the chloroplast. It carries out the reaction chorismate = isochorismate. Its pathway is siderophore biosynthesis; salicylate biosynthesis. Its function is as follows. Isochorismate synthase involved in the synthesis of salicylic acid (SA) required for both local and systemic acquired resistance (LAR and SAR) while SA synthesized through the phenylalanine ammonium lyase (PAL) pathway seems to potentiate plant cell death. Also involved in phylloquinone (vitamin K1) synthesis. Has no isochorismate pyruvate lyase (IPL) activity. The protein is Isochorismate synthase 2, chloroplastic (ICS2) of Arabidopsis thaliana (Mouse-ear cress).